Here is a 191-residue protein sequence, read N- to C-terminus: Peptidyl-tRNA hydrolase (191 aa).

Tyrosine 14 lines the tRNA pocket. The Proton acceptor role is filled by histidine 19. Residues tyrosine 64, asparagine 66, and asparagine 112 each coordinate tRNA.

This sequence belongs to the PTH family. Monomer.

It localises to the cytoplasm. It carries out the reaction an N-acyl-L-alpha-aminoacyl-tRNA + H2O = an N-acyl-L-amino acid + a tRNA + H(+). Its function is as follows. Hydrolyzes ribosome-free peptidyl-tRNAs (with 1 or more amino acids incorporated), which drop off the ribosome during protein synthesis, or as a result of ribosome stalling. In terms of biological role, catalyzes the release of premature peptidyl moieties from peptidyl-tRNA molecules trapped in stalled 50S ribosomal subunits, and thus maintains levels of free tRNAs and 50S ribosomes. The protein is Peptidyl-tRNA hydrolase of Lachnoclostridium phytofermentans (strain ATCC 700394 / DSM 18823 / ISDg) (Clostridium phytofermentans).